The following is a 107-amino-acid chain: Putative septation protein SpoVG (107 aa).

The interval Glu-82–Ala-107 is disordered. Positions Asp-97–Ala-107 are enriched in acidic residues.

It belongs to the SpoVG family.

Its function is as follows. Could be involved in septation. This Staphylococcus carnosus (strain TM300) protein is Putative septation protein SpoVG.